The sequence spans 146 residues: MQLNTIKPAEGSKKNRRHVGRGIGSGLGKTAGRGHKGQKSRSGGFHKVGFEGGQMPMYRRLPKRGFVSLTRRHVGQVTLNDLAKINLPEVDLLVLKAHGFAGEQINAVKVIKTGELKIAVTLKGITATAAAKAAIEAAGGKLVELA.

Positions 1-51 are disordered; it reads MQLNTIKPAEGSKKNRRHVGRGIGSGLGKTAGRGHKGQKSRSGGFHKVGFE. Gly residues predominate over residues 21 to 31; it reads RGIGSGLGKTA.

It belongs to the universal ribosomal protein uL15 family. In terms of assembly, part of the 50S ribosomal subunit.

Binds to the 23S rRNA. In Polynucleobacter necessarius subsp. necessarius (strain STIR1), this protein is Large ribosomal subunit protein uL15.